A 346-amino-acid polypeptide reads, in one-letter code: MTVRVGVIGTGAIGQDHIRRLECKLSGAKVTAVTDVNQDLARKVANTYAKQATVYANDRELIAARDVDAVLVASWGPAHEASVLAALEAGKRVFCEKPLATTADGCMRIVEAEMAHGKRLVQVGFMRRFDSGYLQLKQALEQELVGEPLMVRCIHRNVESAESYTTDMAITDTLIHEIDVLHWLLNDEYQHVRVLYPKKTKHALPHLQDPQLVLLETKKGVIIQAEIFVNCKYGYDIQCEIAGEEGVISLPDVPAVRLCSNGRKGTEVLQDWKKRFEAAYDVELQAFIDDGLKDEPASGPSAWDGYVAAVTADACVKAQESGREESIELPKKPAFYQHSAATPEQV.

Residues 322–331 are compositionally biased toward basic and acidic residues; that stretch reads GREESIELPK. Positions 322–346 are disordered; it reads GREESIELPKKPAFYQHSAATPEQV.

It belongs to the Gfo/Idh/MocA family. In terms of assembly, homotetramer.

It catalyses the reaction myo-inositol + NAD(+) = scyllo-inosose + NADH + H(+). The catalysed reaction is 1D-chiro-inositol + NAD(+) = scyllo-inosine + NADH + H(+). It functions in the pathway polyol metabolism; myo-inositol degradation into acetyl-CoA; acetyl-CoA from myo-inositol: step 1/7. In terms of biological role, involved in the oxidation of myo-inositol (MI) and D-chiro-inositol (DCI) to 2-keto-myo-inositol (2KMI or 2-inosose) and 1-keto-D-chiro-inositol (1KDCI), respectively. This chain is Inositol 2-dehydrogenase/D-chiro-inositol 3-dehydrogenase, found in Shouchella clausii (strain KSM-K16) (Alkalihalobacillus clausii).